A 498-amino-acid polypeptide reads, in one-letter code: MTDKTQAAGLSSDATEVRSQKLDLLRQQIGDVYPAHFHRTLTNAELAEKYAGLEPDTESGETVTVAGRVFSSRNSGMFMDLHDASGKIQIFSHKDTAPEEARALLPMIDLGDIIGVTGEVRRTKRGELTVNAKEITMLCKSLLPMPEKYHGLADIETRYRKRYLDIMVNEESKLRFQQRSRIVSSLRRFLEDEGFMEVETPMLQPIYGGATAEPFKTHHNTLKLDMYLRIAPELYLKRILVSGLTDKVFEINRNFRNEGVSTRHNPEFTMMECYWAYADYEDVMGLVERMFETLALAVHGKTEFEFGDKQLSFKGPFPRVSMPAAVKDATGIDFLALKSDEEARQAARDAGVEIEKDATWGEVLAFLFEEKVEATLIQPAHVIHFPKDISPFAKEVPGEPRLVERFETYCNGWEIGNAFSELNDPVEQRARMVEQMEQAHARGEKEKTLDEDFLDAMDQGMPPAGGLGIGVDRLIMLLTNSPSIRDIILFPARRQKAD.

Glu407 and Glu414 together coordinate Mg(2+).

It belongs to the class-II aminoacyl-tRNA synthetase family. In terms of assembly, homodimer. Requires Mg(2+) as cofactor.

The protein resides in the cytoplasm. The catalysed reaction is tRNA(Lys) + L-lysine + ATP = L-lysyl-tRNA(Lys) + AMP + diphosphate. The protein is Lysine--tRNA ligase (lysS) of Rhizobium meliloti (strain 1021) (Ensifer meliloti).